The sequence spans 204 residues: Superoxide dismutase [Mn] (204 aa).

Residues His29, His84, Asp167, and His171 each coordinate Mn(2+).

This sequence belongs to the iron/manganese superoxide dismutase family. Homotetramer. The cofactor is Mn(2+).

It catalyses the reaction 2 superoxide + 2 H(+) = H2O2 + O2. Its function is as follows. Destroys superoxide anion radicals which are normally produced within the cells and which are toxic to biological systems. The chain is Superoxide dismutase [Mn] (sodA) from Thermus aquaticus.